A 454-amino-acid polypeptide reads, in one-letter code: Tumor necrosis factor receptor superfamily member 1A (454 aa).

Residues 1–29 form the signal peptide; the sequence is MGLPTVPGLLLSLVLLALLMGIHPSGVTG. Topologically, residues 30-212 are extracellular; it reads LVPSLGDREK…VTNPQDSGTA (183 aa). TNFR-Cys repeat units follow at residues 43 to 82, 83 to 125, 126 to 166, and 167 to 196; these read LCPQ…TVCR, ECEK…DTVC, GCKE…NTVC, and NCHA…KLCL. 12 disulfide bridges follow: C44–C58, C59–C72, C62–C81, C84–C99, C102–C117, C105–C125, C127–C143, C146–C158, C149–C166, C168–C179, C182–C195, and C185–C191. N54 is a glycosylation site (N-linked (GlcNAc...) asparagine). N-linked (GlcNAc...) asparagine glycosylation is present at N151. N-linked (GlcNAc...) asparagine glycosylation occurs at N202. The chain crosses the membrane as a helical span at residues 213–235; it reads VLLPLVILLGLCLLSFIFISLMC. The Cytoplasmic portion of the chain corresponds to 236–454; it reads RYPRWRPEVY…APSSTTRLPR (219 aa). The tract at residues 339 to 349 is N-SMase activation domain (NSD); the sequence is VQKWEDSAHPQ. The Death domain maps to 356–441; the sequence is LAILYAVVDG…GCLENILEAL (86 aa). R376 carries (Microbial infection) N-beta-linked (GlcNAc) arginine glycosylation.

Binding of TNF to the extracellular domain leads to homotrimerization. The aggregated death domains provide a novel molecular interface that interacts specifically with the death domain of TRADD. Various TRADD-interacting proteins such as TRAFS, RIPK1 and possibly FADD, are recruited to the complex by their association with TRADD. This complex activates at least two distinct signaling cascades, apoptosis and NF-kappa-B signaling. Interacts with BAG4, BABAM2, FEM1B, GRB2, SQSTM1 and TRPC4AP. Interacts with DAB2IP. Interacts directly with NOL3 (via CARD domain); inhibits TNF-signaling pathway. Interacts with SH3RF2, TRADD and RIPK1. SH3RF2 facilitates the recruitment of RIPK1 and TRADD to TNFRSF1A in a TNF-alpha-dependent process. Interacts with PGLYRP1; this interaction is important for cell death induction. Interacts (via death domain) with MADD (via death domain). Post-translationally, (Microbial infection) Glycosylated at Arg-376 by S.typhimurium protein Ssek3: arginine GlcNAcylation prevents homotypic/heterotypic death domain interactions.

The protein localises to the cell membrane. It localises to the golgi apparatus membrane. Its function is as follows. Receptor for TNFSF2/TNF-alpha and homotrimeric TNFSF1/lymphotoxin-alpha. The adapter molecule FADD recruits caspase-8 to the activated receptor. The resulting death-inducing signaling complex (DISC) performs caspase-8 proteolytic activation which initiates the subsequent cascade of caspases (aspartate-specific cysteine proteases) mediating apoptosis. In Mus musculus (Mouse), this protein is Tumor necrosis factor receptor superfamily member 1A (Tnfrsf1a).